The sequence spans 150 residues: Thyroid hormone-inducible hepatic protein (150 aa).

A disordered region spans residues 83 to 104 (KVAGNETSEAENDAAETEEAEE). Phosphoserine is present on Ser-90. Over residues 90–104 (SEAENDAAETEEAEE) the composition is skewed to acidic residues.

Belongs to the SPOT14 family. Homodimer. Heterodimer with MID1IP1. Interacts with THRB and PLAGL1. Mainly expressed in tissues that synthesize triglycerides.

It localises to the nucleus. The protein localises to the cytoplasm. Functionally, plays a role in the regulation of lipogenesis, especially in lactating mammary gland. Important for the biosynthesis of triglycerides with medium-length fatty acid chains. May modulate lipogenesis by interacting with MID1IP1 and preventing its interaction with ACACA. May function as transcriptional coactivator. May modulate the transcription factor activity of THRB. This Mus musculus (Mouse) protein is Thyroid hormone-inducible hepatic protein (Thrsp).